The following is a 288-amino-acid chain: Aquaporin NIP2-1 (288 aa).

An N-acetylmethionine modification is found at Met1. 2 helical membrane passes run 50–70 (LLAE…AIAV) and 77–97 (VVTL…LVYC). The short motif at 106–108 (NPA) is the NPA 1 element. 3 helical membrane-spanning segments follow: residues 126-146 (AYIT…RLLF), 170-190 (LQAF…VCAV), and 202-222 (GLII…VSGA). An NPA 2 motif is present at residues 225–227 (NPA). Residues 234–254 (LVWGCYKGIWIYLLAPTLGAV) form a helical membrane-spanning segment. Position 278 is a phosphoserine (Ser278).

It belongs to the MIP/aquaporin (TC 1.A.8) family. NIP (TC 1.A.8.12) subfamily. In terms of tissue distribution, specifically expressed in roots with high expression in root elongation zone and root stele.

It is found in the endoplasmic reticulum membrane. Its function is as follows. Low water transport activity in yeast cells. The sequence is that of Aquaporin NIP2-1 (NIP2-1) from Arabidopsis thaliana (Mouse-ear cress).